Consider the following 114-residue polypeptide: SCP2 domain-containing protein YusD (114 aa).

An SCP2 domain is found at 21–101; sequence NASTLLITFQ…RALLKLEAIL (81 aa).

This is SCP2 domain-containing protein YusD (yusD) from Bacillus subtilis (strain 168).